Consider the following 378-residue polypeptide: Protein RecA (378 aa).

79 to 86 (GPESSGKT) contacts ATP.

The protein belongs to the RecA family.

It is found in the cytoplasm. Can catalyze the hydrolysis of ATP in the presence of single-stranded DNA, the ATP-dependent uptake of single-stranded DNA by duplex DNA, and the ATP-dependent hybridization of homologous single-stranded DNAs. It interacts with LexA causing its activation and leading to its autocatalytic cleavage. In Streptococcus equi subsp. zooepidemicus (strain H70), this protein is Protein RecA.